The sequence spans 126 residues: Probable cystatin-16 (126 aa).

The N-terminal stretch at 1–20 (MFLKATLLLGLAVLGMHVWA) is a signal peptide. An intrachain disulfide couples Cys84 to Cys94. Asn106 carries an N-linked (GlcNAc...) asparagine glycan.

Belongs to the cystatin family.

It localises to the secreted. This chain is Probable cystatin-16, found in Bos taurus (Bovine).